We begin with the raw amino-acid sequence, 332 residues long: Holliday junction branch migration complex subunit RuvB (332 aa).

The interval 1 to 181 is large ATPase domain (RuvB-L); the sequence is MTRFLDSDAM…FGITGHMEYY (181 aa). ATP contacts are provided by residues leucine 20, arginine 21, glycine 62, lysine 65, threonine 66, threonine 67, 128-130, arginine 171, tyrosine 181, and arginine 218; that span reads EDF. Threonine 66 is a Mg(2+) binding site. The segment at 182–252 is small ATPAse domain (RuvB-S); the sequence is EENDLTEIIE…ITDKALTMLD (71 aa). The head domain (RuvB-H) stretch occupies residues 255–332; sequence HEGLDYVDQK…EHLGYQRFDK (78 aa). Residues arginine 291, arginine 310, arginine 312, and arginine 315 each contribute to the DNA site.

Belongs to the RuvB family. As to quaternary structure, homohexamer. Forms an RuvA(8)-RuvB(12)-Holliday junction (HJ) complex. HJ DNA is sandwiched between 2 RuvA tetramers; dsDNA enters through RuvA and exits via RuvB. An RuvB hexamer assembles on each DNA strand where it exits the tetramer. Each RuvB hexamer is contacted by two RuvA subunits (via domain III) on 2 adjacent RuvB subunits; this complex drives branch migration. In the full resolvosome a probable DNA-RuvA(4)-RuvB(12)-RuvC(2) complex forms which resolves the HJ.

The protein resides in the cytoplasm. It catalyses the reaction ATP + H2O = ADP + phosphate + H(+). The RuvA-RuvB-RuvC complex processes Holliday junction (HJ) DNA during genetic recombination and DNA repair, while the RuvA-RuvB complex plays an important role in the rescue of blocked DNA replication forks via replication fork reversal (RFR). RuvA specifically binds to HJ cruciform DNA, conferring on it an open structure. The RuvB hexamer acts as an ATP-dependent pump, pulling dsDNA into and through the RuvAB complex. RuvB forms 2 homohexamers on either side of HJ DNA bound by 1 or 2 RuvA tetramers; 4 subunits per hexamer contact DNA at a time. Coordinated motions by a converter formed by DNA-disengaged RuvB subunits stimulates ATP hydrolysis and nucleotide exchange. Immobilization of the converter enables RuvB to convert the ATP-contained energy into a lever motion, pulling 2 nucleotides of DNA out of the RuvA tetramer per ATP hydrolyzed, thus driving DNA branch migration. The RuvB motors rotate together with the DNA substrate, which together with the progressing nucleotide cycle form the mechanistic basis for DNA recombination by continuous HJ branch migration. Branch migration allows RuvC to scan DNA until it finds its consensus sequence, where it cleaves and resolves cruciform DNA. This is Holliday junction branch migration complex subunit RuvB from Streptococcus agalactiae serotype Ia (strain ATCC 27591 / A909 / CDC SS700).